The primary structure comprises 185 residues: Elongation factor P (185 aa).

It belongs to the elongation factor P family.

It localises to the cytoplasm. It participates in protein biosynthesis; polypeptide chain elongation. Functionally, involved in peptide bond synthesis. Stimulates efficient translation and peptide-bond synthesis on native or reconstituted 70S ribosomes in vitro. Probably functions indirectly by altering the affinity of the ribosome for aminoacyl-tRNA, thus increasing their reactivity as acceptors for peptidyl transferase. The sequence is that of Elongation factor P from Geobacillus thermodenitrificans (strain NG80-2).